Reading from the N-terminus, the 303-residue chain is Ribosomal RNA small subunit methyltransferase A (303 aa).

The span at 1-19 shows a compositional bias: low complexity; it reads MSSRPPASFSATFSAARSS. Residues 1 to 34 form a disordered region; that stretch reads MSSRPPASFSATFSAARSSKCVPPPRRPSTDVSL. The S-adenosyl-L-methionine site is built by histidine 55, leucine 57, glycine 82, glutamate 104, aspartate 130, and asparagine 149.

This sequence belongs to the class I-like SAM-binding methyltransferase superfamily. rRNA adenine N(6)-methyltransferase family. RsmA subfamily.

Its subcellular location is the cytoplasm. The catalysed reaction is adenosine(1518)/adenosine(1519) in 16S rRNA + 4 S-adenosyl-L-methionine = N(6)-dimethyladenosine(1518)/N(6)-dimethyladenosine(1519) in 16S rRNA + 4 S-adenosyl-L-homocysteine + 4 H(+). Its function is as follows. Specifically dimethylates two adjacent adenosines (A1518 and A1519) in the loop of a conserved hairpin near the 3'-end of 16S rRNA in the 30S particle. May play a critical role in biogenesis of 30S subunits. The sequence is that of Ribosomal RNA small subunit methyltransferase A from Gluconobacter oxydans (strain 621H) (Gluconobacter suboxydans).